A 251-amino-acid chain; its full sequence is ATP synthase subunit a (251 aa).

5 consecutive transmembrane segments (helical) span residues 34–54 (VFLT…AASS), 93–113 (FVGT…LVPF), 130–150 (INTT…AGFS), 195–215 (LVVG…VMAL), and 216–236 (GLFT…AYIG).

This sequence belongs to the ATPase A chain family. In terms of assembly, F-type ATPases have 2 components, CF(1) - the catalytic core - and CF(0) - the membrane proton channel. CF(1) has five subunits: alpha(3), beta(3), gamma(1), delta(1), epsilon(1). CF(0) has four main subunits: a, b, b' and c.

Its subcellular location is the cellular thylakoid membrane. Functionally, key component of the proton channel; it plays a direct role in the translocation of protons across the membrane. The sequence is that of ATP synthase subunit a from Trichormus variabilis (strain ATCC 29413 / PCC 7937) (Anabaena variabilis).